Here is a 232-residue protein sequence, read N- to C-terminus: tRNA (guanine-N(1)-)-methyltransferase (232 aa).

Glycine 116 provides a ligand contact to S-adenosyl-L-methionine.

Belongs to the RNA methyltransferase TrmD family. As to quaternary structure, homodimer.

It localises to the cytoplasm. It catalyses the reaction guanosine(37) in tRNA + S-adenosyl-L-methionine = N(1)-methylguanosine(37) in tRNA + S-adenosyl-L-homocysteine + H(+). Functionally, specifically methylates guanosine-37 in various tRNAs. The polypeptide is tRNA (guanine-N(1)-)-methyltransferase (Chlorobium luteolum (strain DSM 273 / BCRC 81028 / 2530) (Pelodictyon luteolum)).